A 551-amino-acid polypeptide reads, in one-letter code: Glucose-6-phosphate isomerase (551 aa).

Glu349 (proton donor) is an active-site residue. Active-site residues include His378 and Lys480.

Belongs to the GPI family.

Its subcellular location is the cytoplasm. It catalyses the reaction alpha-D-glucose 6-phosphate = beta-D-fructose 6-phosphate. It functions in the pathway carbohydrate biosynthesis; gluconeogenesis. The protein operates within carbohydrate degradation; glycolysis; D-glyceraldehyde 3-phosphate and glycerone phosphate from D-glucose: step 2/4. Catalyzes the reversible isomerization of glucose-6-phosphate to fructose-6-phosphate. This Parasynechococcus marenigrum (strain WH8102) protein is Glucose-6-phosphate isomerase.